Here is a 130-residue protein sequence, read N- to C-terminus: Small ribosomal subunit protein uS8 (130 aa).

The protein belongs to the universal ribosomal protein uS8 family. In terms of assembly, part of the 30S ribosomal subunit. Contacts proteins S5 and S12.

One of the primary rRNA binding proteins, it binds directly to 16S rRNA central domain where it helps coordinate assembly of the platform of the 30S subunit. This is Small ribosomal subunit protein uS8 from Klebsiella pneumoniae (strain 342).